The chain runs to 206 residues: Large ribosomal subunit protein uL22m (206 aa).

The transit peptide at 1 to 40 (MAAALLRELGALRVPNLRIWATQTLRVLPPSCIHTSASLD) directs the protein to the mitochondrion.

It belongs to the universal ribosomal protein uL22 family. In terms of assembly, component of the mitochondrial ribosome large subunit (39S) which comprises a 16S rRNA and about 50 distinct proteins.

Its subcellular location is the mitochondrion. In Mus musculus (Mouse), this protein is Large ribosomal subunit protein uL22m (Mrpl22).